A 481-amino-acid chain; its full sequence is Phosphoenolpyruvate phosphatase (481 aa).

Positions 1 to 36 are cleaved as a signal peptide; it reads MPIYTSRSCFYLLLFHIILLCSVDKTLCRQTSSFVR. Residue Asn109 is glycosylated (N-linked (GlcNAc...) asparagine). Fe cation is bound by residues Asp168, Asp195, and Tyr198. Asp195 contributes to the Zn(2+) binding site. Asn206 carries N-linked (GlcNAc...) asparagine glycosylation. 2 residues coordinate Zn(2+): Asn232 and His317. Substrate is bound at residue Asn232. The Proton donor role is filled by His327. Position 354 (His354) interacts with Zn(2+). 354-356 serves as a coordination point for substrate; that stretch reads HVH. His356 contacts Fe cation. Residues Asn370 and Asn427 are each glycosylated (N-linked (GlcNAc...) asparagine).

Belongs to the metallophosphoesterase superfamily. Purple acid phosphatase family.

It localises to the vacuole lumen. The enzyme catalyses phosphoenolpyruvate + H2O = pyruvate + phosphate. Its function is as follows. Phosphoenolpyruvate phosphatase that probably operates in the vacuole to release phosphate from phosphoenolpyruvate (PEP) under phosphorus starvation. The sequence is that of Phosphoenolpyruvate phosphatase (ACPEPP) from Allium cepa (Onion).